The primary structure comprises 124 residues: MRHRVKTKSFHRPKEQREALFVNLAIALIEHGKIETTVQKAKALRPFVEKLVTLAKKETVAARRLLNARLRNNTKAATKLFKEIAPLLKERNGGYTRIYKLDKRRRGDDAQMAIIEFVEHPDKE.

The protein belongs to the bacterial ribosomal protein bL17 family. As to quaternary structure, part of the 50S ribosomal subunit. Contacts protein L32.

The polypeptide is Large ribosomal subunit protein bL17 (Persephonella marina (strain DSM 14350 / EX-H1)).